The primary structure comprises 280 residues: Four and a half LIM domains protein 1 (280 aa).

An N-acetylserine modification is found at Ser-2. The residue at position 4 (Lys-4) is an N6-acetyllysine. Residues Cys-7–Cys-31 form a C4-type zinc finger. 4 LIM zinc-binding domains span residues Cys-40–Cys-92, Cys-101–Cys-153, Cys-162–Cys-212, and Cys-221–Cys-276. Lys-86 participates in a covalent cross-link: Glycyl lysine isopeptide (Lys-Gly) (interchain with G-Cter in SUMO2).

Isoform 1 seems to be most abundant in each tissue and isoform 2 much less abundant. Isoform 1 is highly expressed in skeletal muscle and lung, and to a lesser extent in heart, brain and kidney. Isoform 2 was found in brain, lung kidney and genital organs.

The protein localises to the cytoplasm. It is found in the nucleus. Its function is as follows. May have an involvement in muscle development or hypertrophy. Isoform 2 binds to RBP-J and plays a negative regulatory role in the RBP-J-mediated transcription in mammalian systems. In Mus musculus (Mouse), this protein is Four and a half LIM domains protein 1 (Fhl1).